A 79-amino-acid chain; its full sequence is Virulence protein MsgA (79 aa).

Belongs to the DinI family.

Functionally, affects survival in macrophages. This Salmonella typhi protein is Virulence protein MsgA (msgA).